The chain runs to 249 residues: FMN reductase [NAD(P)H] (249 aa).

FMN is bound by residues 11–15 (HRSIR), Q67, 134–136 (PIG), and 173–175 (KPR).

Belongs to the flavin oxidoreductase frp family. In terms of assembly, homodimer.

It carries out the reaction FMNH2 + NADP(+) = FMN + NADPH + 2 H(+). The enzyme catalyses FMNH2 + NAD(+) = FMN + NADH + 2 H(+). FMN is a competitive inhibitor of NADH, and therefore leads to the preferential utilization of NADPH. Functionally, reduces FMNH(2) to FMN, with NADH or NADPH as reductant. It also reduces nitroaromatic compounds, quinones, chromates and azo dyes. It could supply the reduced form of FMN to luciferase-like protein and contribute to the degradation of aromatic compounds. This chain is FMN reductase [NAD(P)H] (nfrA2), found in Bacillus subtilis (strain 168).